Consider the following 330-residue polypeptide: Class III chitinase ARB_03514 (330 aa).

Positions 1-22 are cleaved as a signal peptide; the sequence is MSSVKNILSFVALFAGVKTAYA. The GH18 domain occupies 23–314; it reads GLNSPGHNNV…SAVKGALSAG (292 aa). N-linked (GlcNAc...) asparagine glycans are attached at residues Asn-61 and Asn-135. The Proton donor role is filled by Glu-155. 2 N-linked (GlcNAc...) asparagine glycosylation sites follow: Asn-278 and Asn-302.

This sequence belongs to the glycosyl hydrolase 18 family. Chitinase class III subfamily. Monomer.

The protein resides in the secreted. It carries out the reaction Random endo-hydrolysis of N-acetyl-beta-D-glucosaminide (1-&gt;4)-beta-linkages in chitin and chitodextrins.. Secreted chitinase involved in the degradation of chitin, a component of the cell walls of fungi and exoskeletal elements of some animals (including worms and arthropods). Plays a morphogenetic role during apical growth, cell division and differentiation (cell wall morphogenesis). In Arthroderma benhamiae (strain ATCC MYA-4681 / CBS 112371) (Trichophyton mentagrophytes), this protein is Class III chitinase ARB_03514.